Here is a 584-residue protein sequence, read N- to C-terminus: MDGAPVDHHAQSGTEHAEQRLAEARELLRQSQAEAERLRHQLQSAQRHAAGLSERRRAAEAQTQTAARNNRRMVELLEATRAEIATLKENLDAVTHPPFTFATLEAVHAPREPEEGVETGAVVRGGADVVQNGRRLRVTVSPLLDAARLTPGAQVLLDESSSIVGVAPGTGSGQLLRVKEALPDGGLVLAGTADEERVVRRAPALEGVELRHGDAVTVDARVEWALRRVELSEVDEVLLEEVPDVTFEDIGGLGPQIDRIREAVEIPFLHPEVYREHGLRAPKGIMLYGPPGTGKTMLAKAVANALSARSADGERSFFLNVKGPELLNKYVGETERQIRVIFDRAREKADAGFPVVIFFDEMESLFRTRGSGVSSDVETTIVPQLLTEIDGVEALENVIVIGASNREDMIDPAVLRPGRLDVKIRVDRPDAAGAAEIMAKHLTADVPLHADDVAAAGSADAARGTLIARTVAALYDRGAGTALAELTDVSGTTHALHLADLVSGAVVADVVDRAKRHAVRDYLAAGQAPAALGVREGHLREAVAAVLEDQTDLLATVAPAEWARTSGWRGPRLRSLRMVRGVEA.

Residues A10–H96 adopt a coiled-coil conformation. The interval H40–A66 is disordered. An ATP-binding site is contributed by G292 to M297.

The protein belongs to the AAA ATPase family. As to quaternary structure, homohexamer. Assembles into a hexameric ring structure.

In Micrococcus luteus (strain ATCC 4698 / DSM 20030 / JCM 1464 / CCM 169 / CCUG 5858 / IAM 1056 / NBRC 3333 / NCIMB 9278 / NCTC 2665 / VKM Ac-2230) (Micrococcus lysodeikticus), this protein is AAA ATPase forming ring-shaped complexes.